The following is an 87-amino-acid chain: Large ribosomal subunit protein bL31B (87 aa).

The protein belongs to the bacterial ribosomal protein bL31 family. Type B subfamily. As to quaternary structure, part of the 50S ribosomal subunit.

This is Large ribosomal subunit protein bL31B from Corynebacterium kroppenstedtii (strain DSM 44385 / JCM 11950 / CIP 105744 / CCUG 35717).